A 485-amino-acid chain; its full sequence is Adenosylhomocysteinase (485 aa).

Substrate-binding residues include Thr64, Asp139, and Glu205. Residue 206-208 (TTT) participates in NAD(+) binding. Substrate is bound by residues Lys235 and Asp239. Residues Asn240, 269–274 (GYGDVG), Glu292, Asn327, 348–350 (IGH), and Asn397 each bind NAD(+).

The protein belongs to the adenosylhomocysteinase family. The cofactor is NAD(+).

It carries out the reaction S-adenosyl-L-homocysteine + H2O = L-homocysteine + adenosine. It functions in the pathway amino-acid biosynthesis; L-homocysteine biosynthesis; L-homocysteine from S-adenosyl-L-homocysteine: step 1/1. Its function is as follows. Adenosylhomocysteine is a competitive inhibitor of S-adenosyl-L-methionine-dependent methyl transferase reactions; therefore adenosylhomocysteinase may play a key role in the control of methylations via regulation of the intracellular concentration of adenosylhomocysteine. This chain is Adenosylhomocysteinase (SAHH), found in Phalaenopsis sp. (Moth orchid).